We begin with the raw amino-acid sequence, 62 residues long: Translational regulator CsrA 3 (62 aa).

This sequence belongs to the CsrA/RsmA family. As to quaternary structure, homodimer; the beta-strands of each monomer intercalate to form a hydrophobic core, while the alpha-helices form wings that extend away from the core.

It localises to the cytoplasm. A key translational regulator that binds mRNA to regulate translation initiation and/or mRNA stability. Mediates global changes in gene expression, shifting from rapid growth to stress survival by linking envelope stress, the stringent response and the catabolite repression systems. Usually binds in the 5'-UTR; binding at or near the Shine-Dalgarno sequence prevents ribosome-binding, repressing translation, binding elsewhere in the 5'-UTR can activate translation and/or stabilize the mRNA. Its function is antagonized by small RNA(s). The sequence is that of Translational regulator CsrA 3 from Pseudomonas syringae pv. tomato (strain ATCC BAA-871 / DC3000).